The following is a 1395-amino-acid chain: DNA-directed RNA polymerase subunit beta' (1395 aa).

Residues cysteine 70, cysteine 72, cysteine 85, and cysteine 88 each coordinate Zn(2+). Aspartate 470, aspartate 472, and aspartate 474 together coordinate Mg(2+). Residues cysteine 815, cysteine 889, cysteine 896, and cysteine 899 each coordinate Zn(2+).

This sequence belongs to the RNA polymerase beta' chain family. As to quaternary structure, the RNAP catalytic core consists of 2 alpha, 1 beta, 1 beta' and 1 omega subunit. When a sigma factor is associated with the core the holoenzyme is formed, which can initiate transcription. Requires Mg(2+) as cofactor. The cofactor is Zn(2+).

It carries out the reaction RNA(n) + a ribonucleoside 5'-triphosphate = RNA(n+1) + diphosphate. Functionally, DNA-dependent RNA polymerase catalyzes the transcription of DNA into RNA using the four ribonucleoside triphosphates as substrates. The sequence is that of DNA-directed RNA polymerase subunit beta' from Anaeromyxobacter sp. (strain Fw109-5).